Consider the following 72-residue polypeptide: Large ribosomal subunit protein bL31 (72 aa).

Zn(2+)-binding residues include Cys-16, Cys-18, Cys-37, and Cys-40.

It belongs to the bacterial ribosomal protein bL31 family. Type A subfamily. In terms of assembly, part of the 50S ribosomal subunit. The cofactor is Zn(2+).

In terms of biological role, binds the 23S rRNA. This chain is Large ribosomal subunit protein bL31, found in Idiomarina loihiensis (strain ATCC BAA-735 / DSM 15497 / L2-TR).